A 505-amino-acid polypeptide reads, in one-letter code: ATP nucleosidase Cap17 (505 aa).

The tract at residues 1–229 is cyclic oligonucleotide sensing-domain; the sequence is MTNTNNEYVL…RLSEIAVELL (229 aa). The tract at residues 239–505 is purine nucleoside phosphorylase domain; it reads LHTPSVLILT…DYLQHGWIRA (267 aa).

It belongs to the Cap17 family.

It carries out the reaction ATP + H2O = D-ribose 5-triphosphate + adenine. The catalysed reaction is dATP + H2O = 2-deoxyribose 5-triphosphate + adenine. In terms of biological role, effector protein with (d)ATP degrading activity of a CBASS antivirus system. CBASS (cyclic oligonucleotide-based antiphage signaling system) provides immunity against bacteriophage. A CD-NTase protein synthesizes cyclic nucleotides in response to infection; these serve as specific second messenger signals. The signals activate a diverse range of effectors, leading to bacterial cell death and thus abortive phage infection. A type III CBASS system. Expression of this CBASS system (Cap18-Cap6-Cap7-CdnC-CapW-Cap17) in a susceptible E.coli (strain MG1655) confers resistance to bacteriophage P1, leading to cell lysis. By 50 minutes post-infection, ATP levels are markedly reduced while dATP has been eliminated. The C-terminal purine nucleoside phosphorylase (PNP) domain cleaves the N-glycosidic bond of (d)ATP to release adenine and a sugar triphosphate; has no activity on other (d)NTPs, nor on DNA or RNA. In vivo during phage infection has pleoitropic effects on nucleotide accumulation. This protein may be activated by the cognate CD-NTase (CdnC). This Escherichia coli (strain KTE188) protein is ATP nucleosidase Cap17.